Consider the following 153-residue polypeptide: Ribosomal RNA large subunit methyltransferase H (153 aa).

Residues Leu-70, Gly-102, and 121-126 (LSRMTF) contribute to the S-adenosyl-L-methionine site.

The protein belongs to the RNA methyltransferase RlmH family. As to quaternary structure, homodimer.

Its subcellular location is the cytoplasm. The enzyme catalyses pseudouridine(1915) in 23S rRNA + S-adenosyl-L-methionine = N(3)-methylpseudouridine(1915) in 23S rRNA + S-adenosyl-L-homocysteine + H(+). In terms of biological role, specifically methylates the pseudouridine at position 1915 (m3Psi1915) in 23S rRNA. In Geotalea uraniireducens (strain Rf4) (Geobacter uraniireducens), this protein is Ribosomal RNA large subunit methyltransferase H.